A 74-amino-acid chain; its full sequence is Large ribosomal subunit protein bL31 (74 aa).

The Zn(2+) site is built by Cys16, Cys18, Cys37, and Cys40.

It belongs to the bacterial ribosomal protein bL31 family. Type A subfamily. Part of the 50S ribosomal subunit. Requires Zn(2+) as cofactor.

Its function is as follows. Binds the 23S rRNA. The polypeptide is Large ribosomal subunit protein bL31 (Koribacter versatilis (strain Ellin345)).